The chain runs to 482 residues: tRNA sulfurtransferase (482 aa).

In terms of domain architecture, THUMP spans Ala61–Ser165. ATP-binding positions include Leu183–Ile184, Lys265, Gly287, and Gln296. A disulfide bond links Cys344 and Cys456. A Rhodanese domain is found at Val404 to Pro482. Catalysis depends on Cys456, which acts as the Cysteine persulfide intermediate.

This sequence belongs to the ThiI family.

Its subcellular location is the cytoplasm. It catalyses the reaction [ThiI sulfur-carrier protein]-S-sulfanyl-L-cysteine + a uridine in tRNA + 2 reduced [2Fe-2S]-[ferredoxin] + ATP + H(+) = [ThiI sulfur-carrier protein]-L-cysteine + a 4-thiouridine in tRNA + 2 oxidized [2Fe-2S]-[ferredoxin] + AMP + diphosphate. The enzyme catalyses [ThiS sulfur-carrier protein]-C-terminal Gly-Gly-AMP + S-sulfanyl-L-cysteinyl-[cysteine desulfurase] + AH2 = [ThiS sulfur-carrier protein]-C-terminal-Gly-aminoethanethioate + L-cysteinyl-[cysteine desulfurase] + A + AMP + 2 H(+). The protein operates within cofactor biosynthesis; thiamine diphosphate biosynthesis. In terms of biological role, catalyzes the ATP-dependent transfer of a sulfur to tRNA to produce 4-thiouridine in position 8 of tRNAs, which functions as a near-UV photosensor. Also catalyzes the transfer of sulfur to the sulfur carrier protein ThiS, forming ThiS-thiocarboxylate. This is a step in the synthesis of thiazole, in the thiamine biosynthesis pathway. The sulfur is donated as persulfide by IscS. The sequence is that of tRNA sulfurtransferase from Vibrio campbellii (strain ATCC BAA-1116).